Reading from the N-terminus, the 59-residue chain is Large ribosomal subunit protein bL32 (59 aa).

A compositionally biased stretch (basic residues) spans 1–16 (MAVPKRKTSPSRRGMR). The interval 1-20 (MAVPKRKTSPSRRGMRRSHD) is disordered.

It belongs to the bacterial ribosomal protein bL32 family.

In Novosphingobium aromaticivorans (strain ATCC 700278 / DSM 12444 / CCUG 56034 / CIP 105152 / NBRC 16084 / F199), this protein is Large ribosomal subunit protein bL32.